The following is a 301-amino-acid chain: tRNA dimethylallyltransferase (301 aa).

9–16 lines the ATP pocket; sequence GPTASGKS. 11–16 is a binding site for substrate; the sequence is TASGKS. The interaction with substrate tRNA stretch occupies residues 34–37; sequence DSMQ.

The protein belongs to the IPP transferase family. As to quaternary structure, monomer. Requires Mg(2+) as cofactor.

The catalysed reaction is adenosine(37) in tRNA + dimethylallyl diphosphate = N(6)-dimethylallyladenosine(37) in tRNA + diphosphate. Its function is as follows. Catalyzes the transfer of a dimethylallyl group onto the adenine at position 37 in tRNAs that read codons beginning with uridine, leading to the formation of N6-(dimethylallyl)adenosine (i(6)A). In Corynebacterium glutamicum (strain R), this protein is tRNA dimethylallyltransferase.